We begin with the raw amino-acid sequence, 184 residues long: MKIEGSDQLGGEQPQRQPLPPESMAQRQLERLLAKAPESDLFERWQQGAPLEGLLAVVAPAAKRELLWQIYQQGNKPAPEIGKQLFAPVTDKLIARFGERQSPVLDAIDLPELRATMREFDPLASRREKVLLNLLSELRDGQGAVPAEHLFLDALARRELMTLIPLNGMVDNLMRNSHKLDLEA.

The segment at 1-25 (MKIEGSDQLGGEQPQRQPLPPESMA) is disordered.

Belongs to the YopR family.

It localises to the secreted. In terms of biological role, may be involved in the regulation of the assembly of the type III secretion system (T3SS), also called injectisome, which is used to inject bacterial effector proteins into eukaryotic host cells. May control the polymerization of the needle. This Aeromonas salmonicida subsp. salmonicida protein is Probable type 3 secretion system regulator AscH.